Consider the following 102-residue polypeptide: Protamine-2 (102 aa).

The segment at 1–102 (MVRCRVRSPS…RTRRRTCRRH (102 aa)) is disordered. A phosphoserine mark is found at serine 8, serine 10, and serine 37. Over residues 8-17 (SPSERSHEVY) the composition is skewed to basic and acidic residues. Positions 39–48 (EHVEVYERTH) are enriched in basic and acidic residues. Over residues 49-102 (GHSHYRRRHCSRRRLRRIHRQQHRSCRRRKRRSCRHRRRHRKGCRTRRRTCRRH) the composition is skewed to basic residues.

It belongs to the protamine P2 family. In terms of assembly, interacts with TDRP. Post-translationally, proteolytic processing into mature chains is required for histone eviction during spermatogenesis. Transition proteins (TNP1 and TNP2) are required for processing. Testis.

It is found in the nucleus. The protein resides in the chromosome. Functionally, protamines substitute for histones in the chromatin of sperm during the haploid phase of spermatogenesis. They compact sperm DNA into a highly condensed, stable and inactive complex. This Gorilla gorilla gorilla (Western lowland gorilla) protein is Protamine-2 (PRM2).